Consider the following 76-residue polypeptide: Acyl carrier protein (76 aa).

The Carrier domain occupies 1-76 (MDTFESVKAV…DVVAYIEANK (76 aa)). O-(pantetheine 4'-phosphoryl)serine is present on serine 36.

This sequence belongs to the acyl carrier protein (ACP) family. Post-translationally, 4'-phosphopantetheine is transferred from CoA to a specific serine of apo-ACP by AcpS. This modification is essential for activity because fatty acids are bound in thioester linkage to the sulfhydryl of the prosthetic group.

It is found in the cytoplasm. It participates in lipid metabolism; fatty acid biosynthesis. Carrier of the growing fatty acid chain in fatty acid biosynthesis. The sequence is that of Acyl carrier protein from Helicobacter hepaticus (strain ATCC 51449 / 3B1).